The primary structure comprises 876 residues: Valine--tRNA ligase (876 aa).

The 'HIGH' region signature appears at 44–54; the sequence is PNVTGKLHLGH. The 'KMSKS' region signature appears at 520-524; sequence KMSKS. An ATP-binding site is contributed by K523. Residues 805-876 adopt a coiled-coil conformation; the sequence is LEGLIDMDKE…VKARIEQLKA (72 aa).

This sequence belongs to the class-I aminoacyl-tRNA synthetase family. ValS type 1 subfamily. As to quaternary structure, monomer.

The protein localises to the cytoplasm. It catalyses the reaction tRNA(Val) + L-valine + ATP = L-valyl-tRNA(Val) + AMP + diphosphate. In terms of biological role, catalyzes the attachment of valine to tRNA(Val). As ValRS can inadvertently accommodate and process structurally similar amino acids such as threonine, to avoid such errors, it has a 'posttransfer' editing activity that hydrolyzes mischarged Thr-tRNA(Val) in a tRNA-dependent manner. This chain is Valine--tRNA ligase, found in Staphylococcus aureus (strain bovine RF122 / ET3-1).